The primary structure comprises 135 residues: Putative nickel-responsive regulator (135 aa).

H79, H90, H92, and C98 together coordinate Ni(2+).

This sequence belongs to the transcriptional regulatory CopG/NikR family. Ni(2+) serves as cofactor.

Transcriptional regulator. The polypeptide is Putative nickel-responsive regulator (Dictyoglomus turgidum (strain DSM 6724 / Z-1310)).